Here is a 503-residue protein sequence, read N- to C-terminus: Trehalose-6-phosphate synthase (503 aa).

Residue Arg-22 coordinates D-glucose 6-phosphate. Gly-42–Gly-43 is a binding site for UDP-alpha-D-glucose. The D-glucose 6-phosphate site is built by Tyr-94 and Asp-148. Arg-290 and Lys-295 together coordinate UDP-alpha-D-glucose. Residue Arg-328 coordinates D-glucose 6-phosphate. Leu-393–Glu-397 is a UDP-alpha-D-glucose binding site. The tract at residues Gly-481 to Phe-503 is disordered.

This sequence belongs to the glycosyltransferase 20 family. Homotetramer.

The enzyme catalyses ADP-alpha-D-glucose + D-glucose 6-phosphate = alpha,alpha-trehalose 6-phosphate + ADP + H(+). The catalysed reaction is CDP-alpha-D-glucose + D-glucose 6-phosphate = alpha,alpha-trehalose 6-phosphate + CDP + H(+). It catalyses the reaction GDP-alpha-D-glucose + D-glucose 6-phosphate = alpha,alpha-trehalose 6-phosphate + GDP + H(+). It carries out the reaction TDP-alpha-D-glucose + D-glucose 6-phosphate = 5-methyl-UDP + alpha,alpha-trehalose 6-phosphate + H(+). The enzyme catalyses D-glucose 6-phosphate + UDP-alpha-D-glucose = alpha,alpha-trehalose 6-phosphate + UDP + H(+). It participates in glycan biosynthesis; trehalose biosynthesis. With respect to regulation, stimulated by the polynucleotide FII (physiological activator), and by chondroitin sulfate (CS) and heparin. Activation by the polyanion is inhibited by high salt concentration as well as by high concentrations of mononucleoside phosphates. Involved in the production of glycogen and alpha-glucan via the TreS-Pep2 branch involved in the biosynthesis of maltose-1-phosphate (M1P), and probably in the osmoprotection via the biosynthesis of trehalose. Catalyzes the transfer of glucose from UDP-glucose (UDP-Glc) to glucose-6-phosphate (Glc-6-P) to form trehalose-6-phosphate. ADP-Glc, CDP-Glc, GDP-Glc and TDP-Glc are also glucosyl donors, however, when the pyrimidine sugar nucleotides (CDP-Glc, TDP-Glc and UDP-Glc) are used as substrates, there is an absolute requirement for a high molecular weight polyanion for activity. The chain is Trehalose-6-phosphate synthase from Mycolicibacterium smegmatis (strain ATCC 700084 / mc(2)155) (Mycobacterium smegmatis).